A 207-amino-acid polypeptide reads, in one-letter code: 2,3-bisphosphoglycerate-dependent phosphoglycerate mutase (207 aa).

Residues arginine 10–asparagine 17, threonine 23–glycine 24, arginine 62, glutamate 89–tyrosine 92, lysine 100, arginine 116–arginine 117, and glycine 160–asparagine 161 each bind substrate. Histidine 11 functions as the Tele-phosphohistidine intermediate in the catalytic mechanism. The Proton donor/acceptor role is filled by glutamate 89.

It belongs to the phosphoglycerate mutase family. BPG-dependent PGAM subfamily. As to quaternary structure, homodimer.

It carries out the reaction (2R)-2-phosphoglycerate = (2R)-3-phosphoglycerate. It functions in the pathway carbohydrate degradation; glycolysis; pyruvate from D-glyceraldehyde 3-phosphate: step 3/5. Catalyzes the interconversion of 2-phosphoglycerate and 3-phosphoglycerate. This Rhodopseudomonas palustris (strain BisB18) protein is 2,3-bisphosphoglycerate-dependent phosphoglycerate mutase.